Here is a 295-residue protein sequence, read N- to C-terminus: Bifunctional protein FolD (295 aa).

NADP(+) is bound by residues 166–168 (GRS), S191, and I232.

The protein belongs to the tetrahydrofolate dehydrogenase/cyclohydrolase family. Homodimer.

The enzyme catalyses (6R)-5,10-methylene-5,6,7,8-tetrahydrofolate + NADP(+) = (6R)-5,10-methenyltetrahydrofolate + NADPH. The catalysed reaction is (6R)-5,10-methenyltetrahydrofolate + H2O = (6R)-10-formyltetrahydrofolate + H(+). The protein operates within one-carbon metabolism; tetrahydrofolate interconversion. In terms of biological role, catalyzes the oxidation of 5,10-methylenetetrahydrofolate to 5,10-methenyltetrahydrofolate and then the hydrolysis of 5,10-methenyltetrahydrofolate to 10-formyltetrahydrofolate. The protein is Bifunctional protein FolD of Rhodopseudomonas palustris (strain BisB18).